The chain runs to 317 residues: MQFYLDFEKPLVELEQKLSELRDYSTDEVDFSGEIQRLEKKAEKLRREIFSNLNRWQVTQLARHVNRPFTLDFVEHVFTDWFEVHGDRNFRDDPALVCGFARLDGQPCAVIGHQKGRDTKEKVYRNFGMPNPEGYRKALRVMQMAEQFGLPIFTFVDTPGAFPGIGAEERGQAEAIARNLREMAALKVPVIVTVTGEGGSGGALAVAVGNRVLMMENAVYSVISPEGCAAILWKDGAKGPVAAEALKLTAGDIQNLGCVIDEVIPEPLGGAHSDHKAAAEQVRICLKKHLDDLKDLSSDELREQRYQKLRAMTMVQE.

The CoA carboxyltransferase C-terminal domain occupies 37 to 292; that stretch reads RLEKKAEKLR…RICLKKHLDD (256 aa).

It belongs to the AccA family. In terms of assembly, acetyl-CoA carboxylase is a heterohexamer composed of biotin carboxyl carrier protein (AccB), biotin carboxylase (AccC) and two subunits each of ACCase subunit alpha (AccA) and ACCase subunit beta (AccD).

It localises to the cytoplasm. It carries out the reaction N(6)-carboxybiotinyl-L-lysyl-[protein] + acetyl-CoA = N(6)-biotinyl-L-lysyl-[protein] + malonyl-CoA. It participates in lipid metabolism; malonyl-CoA biosynthesis; malonyl-CoA from acetyl-CoA: step 1/1. Functionally, component of the acetyl coenzyme A carboxylase (ACC) complex. First, biotin carboxylase catalyzes the carboxylation of biotin on its carrier protein (BCCP) and then the CO(2) group is transferred by the carboxyltransferase to acetyl-CoA to form malonyl-CoA. In Syntrophotalea carbinolica (strain DSM 2380 / NBRC 103641 / GraBd1) (Pelobacter carbinolicus), this protein is Acetyl-coenzyme A carboxylase carboxyl transferase subunit alpha.